Here is an 802-residue protein sequence, read N- to C-terminus: Phenylalanine--tRNA ligase beta subunit (802 aa).

The 112-residue stretch at 38 to 149 (KSSLKPFVIA…ADAPVGTSFA (112 aa)) folds into the tRNA-binding domain. A B5 domain is found at 399 to 474 (HKPKIVSFPI…RIHGVDNIAP (76 aa)). Aspartate 452, aspartate 458, glutamate 461, and glutamate 462 together coordinate Mg(2+). Residues 708–801 (SAFQAVKRDF…VGKQTGGVLR (94 aa)) form the FDX-ACB domain.

It belongs to the phenylalanyl-tRNA synthetase beta subunit family. Type 1 subfamily. As to quaternary structure, tetramer of two alpha and two beta subunits. It depends on Mg(2+) as a cofactor.

It is found in the cytoplasm. It carries out the reaction tRNA(Phe) + L-phenylalanine + ATP = L-phenylalanyl-tRNA(Phe) + AMP + diphosphate + H(+). The polypeptide is Phenylalanine--tRNA ligase beta subunit (Mesorhizobium japonicum (strain LMG 29417 / CECT 9101 / MAFF 303099) (Mesorhizobium loti (strain MAFF 303099))).